Reading from the N-terminus, the 103-residue chain is uncharacterized protein (103 aa).

Transmembrane regions (helical) follow at residues 12–34 (GFSWGIALFCLPILLWPLALTIS), 49–66 (TLMSVFLWAYPFGLALIA), and 79–101 (FARGLLGLSAVAFYGMLFYVAGG).

Its subcellular location is the cell membrane. This is an uncharacterized protein from Pasteurella multocida (strain Pm70).